Here is a 356-residue protein sequence, read N- to C-terminus: Protein pelota homolog (356 aa).

The protein belongs to the eukaryotic release factor 1 family. Pelota subfamily. In terms of assembly, monomer. The cofactor is a divalent metal cation.

The protein resides in the cytoplasm. In terms of biological role, may function in recognizing stalled ribosomes, interact with stem-loop structures in stalled mRNA molecules, and effect endonucleolytic cleavage of the mRNA. May play a role in the release non-functional ribosomes and degradation of damaged mRNAs. Has endoribonuclease activity. The protein is Protein pelota homolog of Pyrococcus furiosus (strain ATCC 43587 / DSM 3638 / JCM 8422 / Vc1).